The primary structure comprises 273 residues: 3-methyl-2-oxobutanoate hydroxymethyltransferase (273 aa).

The Mg(2+) site is built by Asp53 and Asp92. Residues 53 to 54 (DS), Asp92, and Lys120 contribute to the 3-methyl-2-oxobutanoate site. Glu122 is a Mg(2+) binding site. Glu189 acts as the Proton acceptor in catalysis.

The protein belongs to the PanB family. Homodecamer; pentamer of dimers. Mg(2+) is required as a cofactor.

It is found in the cytoplasm. The enzyme catalyses 3-methyl-2-oxobutanoate + (6R)-5,10-methylene-5,6,7,8-tetrahydrofolate + H2O = 2-dehydropantoate + (6S)-5,6,7,8-tetrahydrofolate. Its pathway is cofactor biosynthesis; (R)-pantothenate biosynthesis; (R)-pantoate from 3-methyl-2-oxobutanoate: step 1/2. Catalyzes the reversible reaction in which hydroxymethyl group from 5,10-methylenetetrahydrofolate is transferred onto alpha-ketoisovalerate to form ketopantoate. This Cupriavidus taiwanensis (strain DSM 17343 / BCRC 17206 / CCUG 44338 / CIP 107171 / LMG 19424 / R1) (Ralstonia taiwanensis (strain LMG 19424)) protein is 3-methyl-2-oxobutanoate hydroxymethyltransferase.